The primary structure comprises 164 residues: Ribosome-binding factor A (164 aa).

This sequence belongs to the RbfA family. In terms of assembly, monomer. Binds 30S ribosomal subunits, but not 50S ribosomal subunits or 70S ribosomes.

It localises to the cytoplasm. Its function is as follows. One of several proteins that assist in the late maturation steps of the functional core of the 30S ribosomal subunit. Associates with free 30S ribosomal subunits (but not with 30S subunits that are part of 70S ribosomes or polysomes). Required for efficient processing of 16S rRNA. May interact with the 5'-terminal helix region of 16S rRNA. The chain is Ribosome-binding factor A from Caulobacter sp. (strain K31).